A 366-amino-acid polypeptide reads, in one-letter code: Protein FAM131A (366 aa).

Positions 342-366 are disordered; that stretch reads QRQASDLASSGVVSLDEDEAEPEEQ. Acidic residues predominate over residues 356 to 366; the sequence is LDEDEAEPEEQ.

Belongs to the FAM131 family.

The sequence is that of Protein FAM131A (FAM131A) from Homo sapiens (Human).